The chain runs to 171 residues: CS1 fimbrial subunit A (171 aa).

The signal sequence occupies residues 1–23 (MKLKKTIGAMALATLFATMGASA).

This sequence belongs to the fimbrial CS1 protein family.

The protein localises to the fimbrium. Fimbriae (also called pili), polar filaments radiating from the surface of the bacterium to a length of 0.5-1.5 micrometers and numbering 100-300 per cell, enable bacteria to colonize the epithelium of specific host organs. In Escherichia coli, this protein is CS1 fimbrial subunit A (csoA).